We begin with the raw amino-acid sequence, 276 residues long: MSKAKSPIKSSKKSVNQPKSVLREKKVKDAEKAEHISLQGHVDNSDEEGQDKEFFPGFGSSDDDEEDSPNALVNTSRQIMDLGEDAEKTIKKKVSENKNLQKKKGVLYVGRLPHGFYEKQMRMYFSQFGPVLRLRMSRNRKTGSSKHYAFIEFESLDVANVVAETMHNYLLYGKLLQCKVIPEDQVHENMFKGADVPFKRIPHATIARLQHEKPLSKEKADKLITRHNRKLKLKKRKLKELGITLESDVSHPKAASPVASKKSSKKKNKKVLAAHK.

The tract at residues 1–70 (MSKAKSPIKS…SDDDEEDSPN (70 aa)) is disordered. The span at 21-35 (VLREKKVKDAEKAEH) shows a compositional bias: basic and acidic residues. In terms of domain architecture, RRM spans 105–183 (GVLYVGRLPH…KLLQCKVIPE (79 aa)). Residues 249–276 (VSHPKAASPVASKKSSKKKNKKVLAAHK) form a disordered region. The segment covering 252 to 261 (PKAASPVASK) has biased composition (low complexity). Over residues 262–276 (KSSKKKNKKVLAAHK) the composition is skewed to basic residues.

It localises to the nucleus. It is found in the nucleolus. This is an uncharacterized protein from Schizosaccharomyces pombe (strain 972 / ATCC 24843) (Fission yeast).